We begin with the raw amino-acid sequence, 485 residues long: Cyclic GMP-AMP synthase-like receptor (485 aa).

ATP contacts are provided by residues Ser-70 and 82–84 (EYD). Glu-82, Asp-84, and Asp-204 together coordinate Mg(2+). Residues Asp-204 and 247–254 (RLSFYEQE) each bind GTP. ATP-binding residues include Lys-271 and Lys-274. Mn(2+) contacts are provided by Ile-298 and Asp-304.

It belongs to the mab-21 family. Requires Mg(2+) as cofactor. Mn(2+) is required as a cofactor.

It carries out the reaction GTP + ATP = 2',3'-cGAMP + 2 diphosphate. The catalysed reaction is GTP + ATP = pppGp(2'-5')A + diphosphate. The enzyme catalyses pppGp(2'-5')A = 2',3'-cGAMP + diphosphate. Its function is as follows. Nucleotidyltransferase that catalyzes the formation of cyclic GMP-AMP (2',3'-cGAMP) from ATP and GTP and plays a key role in innate immunity. Directly binds some unknown ligand, activating the nucleotidyltransferase activity, leading to synthesis of 2',3'-cGAMP, a second messenger that binds to and activates Sting, thereby triggering the immune response via activation of the NF-kappa-B transcription factor. The polypeptide is Cyclic GMP-AMP synthase-like receptor (Trichogramma pretiosum (Parasitoid wasp)).